Consider the following 1043-residue polypeptide: Protein translocase subunit SecA (1043 aa).

Residues glutamine 143, 161–165, and aspartate 665 each bind ATP; that span reads GEGKT. Over residues 980-1005 the composition is skewed to low complexity; the sequence is ATAAPAAETTTTAKAADAARQQPPAA. The tract at residues 980–1043 is disordered; it reads ATAAPAAETT…KYKHCHGRNA (64 aa). The segment covering 1008-1022 has biased composition (basic and acidic residues); the sequence is EEQKRQPVHVEKTPG. 4 residues coordinate Zn(2+): cysteine 1027, cysteine 1029, cysteine 1038, and histidine 1039. The segment covering 1033–1043 has biased composition (basic residues); it reads KKYKHCHGRNA.

It belongs to the SecA family. In terms of assembly, monomer and homodimer. Part of the essential Sec protein translocation apparatus which comprises SecA, SecYEG and auxiliary proteins SecDF. Other proteins may also be involved. Zn(2+) is required as a cofactor.

The protein resides in the cell inner membrane. Its subcellular location is the cytoplasm. The enzyme catalyses ATP + H2O + cellular proteinSide 1 = ADP + phosphate + cellular proteinSide 2.. Its function is as follows. Part of the Sec protein translocase complex. Interacts with the SecYEG preprotein conducting channel. Has a central role in coupling the hydrolysis of ATP to the transfer of proteins into and across the cell membrane, serving as an ATP-driven molecular motor driving the stepwise translocation of polypeptide chains across the membrane. In Chloroherpeton thalassium (strain ATCC 35110 / GB-78), this protein is Protein translocase subunit SecA.